The chain runs to 320 residues: MMENLLIPPPPWTGRMDGTSSHHLRWHQAVTPLQDGVEPGACVFIGFSSDEGVERNKGRRGASRGPDALRSALSSMALAEPLRAYDAGTVAVTDNRLEAGQEALGAVVAATLDAGQFPVVLGGGHEVAFGTYLGLAQASVRTPGKRIGILNLDAHFDLRSDPVPSSGTPFRQILEREHAAGTTLQYSVLGISQPSNTTALFDTARGYDVRYLLDDECSVSDRHRVAVFVSEFLSDVDLVYLTIDLDVLPAAVAPGVSAPAAYGVPAETIQFVCDAIAASGKLAVVDVAELNPSFDIDNRTARTAARFIHRIVTKRIPIVR.

Mn(2+) is bound by residues H125, D153, H155, D157, D244, and D246.

This sequence belongs to the arginase family. It depends on Mn(2+) as a cofactor.

It carries out the reaction N-formimidoyl-L-glutamate + H2O = formamide + L-glutamate. Its pathway is amino-acid degradation; L-histidine degradation into L-glutamate; L-glutamate from N-formimidoyl-L-glutamate (hydrolase route): step 1/1. Catalyzes the conversion of N-formimidoyl-L-glutamate to L-glutamate and formamide. This chain is Formimidoylglutamase, found in Rhodococcus opacus (strain B4).